Here is a 144-residue protein sequence, read N- to C-terminus: Transcription antitermination protein NusB (144 aa).

It belongs to the NusB family.

Its function is as follows. Involved in transcription antitermination. Required for transcription of ribosomal RNA (rRNA) genes. Binds specifically to the boxA antiterminator sequence of the ribosomal RNA (rrn) operons. In Carboxydothermus hydrogenoformans (strain ATCC BAA-161 / DSM 6008 / Z-2901), this protein is Transcription antitermination protein NusB.